Reading from the N-terminus, the 171-residue chain is Tetratricopeptide repeat protein 9C (171 aa).

TPR repeat units follow at residues 8-41, 72-107, and 108-141; these read AQVYKEEGNQRYREGKYRDAVSRYHRALLQLRGL, THCYNNLAACLLQMEPVNYERVREYSQKVLERQPDN, and AKALYRAGVAFFHLQDYDRARHHLLAAVNRQPKD.

Belongs to the TTC9 family.

The chain is Tetratricopeptide repeat protein 9C (Ttc9c) from Mus musculus (Mouse).